A 432-amino-acid polypeptide reads, in one-letter code: Putative D-alanyl-D-alanine carboxypeptidase (432 aa).

The helical; Signal-anchor transmembrane segment at 7–25 (ATVLLTFSLSAFAVEYPVL) threads the bilayer.

It belongs to the peptidase S12 family. YfeW subfamily.

Its subcellular location is the cell inner membrane. It carries out the reaction Preferential cleavage: (Ac)2-L-Lys-D-Ala-|-D-Ala. Also transpeptidation of peptidyl-alanyl moieties that are N-acyl substituents of D-alanine.. This Salmonella choleraesuis (strain SC-B67) protein is Putative D-alanyl-D-alanine carboxypeptidase.